The primary structure comprises 97 residues: UPF0235 protein cbdbA1230 (97 aa).

This sequence belongs to the UPF0235 family.

This Dehalococcoides mccartyi (strain CBDB1) protein is UPF0235 protein cbdbA1230.